The following is a 294-amino-acid chain: MTSTESSQPADRYVVVGNPVAHSRSPFIHAAFARQTGEAVEYGRLEAPLDAFADTMRAFLAEGGYGFNVTVPFKLQAYDLADRLTPRAEAAGAVNTMWIEDGLIHGDNTDGIGLVRDIQDNLDTLLEDKRVLLLGAGGAAMGAMLPLIECRPSRIVVANRTASRASDMLEEFVEAADSFGVELWGGGLDALEQLSEDDVCDVVINASSSSLHGEVPPVPAFLLGDGVLAYDMMYGAEPTVFLQHAAQCGARTADGLGMLVEQAAEAFYIWRGVRPRTAPVLADLRAALQAERKG.

Shikimate-binding positions include 23–25 (SRS) and threonine 70. Residue lysine 74 is the Proton acceptor of the active site. Residues asparagine 95 and aspartate 110 each contribute to the shikimate site. NADP(+) contacts are provided by residues 135 to 139 (GAGGA), 159 to 164 (NRTASR), and methionine 232. Shikimate is bound at residue tyrosine 234. Position 255 (glycine 255) interacts with NADP(+).

Belongs to the shikimate dehydrogenase family. In terms of assembly, homodimer.

It catalyses the reaction shikimate + NADP(+) = 3-dehydroshikimate + NADPH + H(+). It functions in the pathway metabolic intermediate biosynthesis; chorismate biosynthesis; chorismate from D-erythrose 4-phosphate and phosphoenolpyruvate: step 4/7. Involved in the biosynthesis of the chorismate, which leads to the biosynthesis of aromatic amino acids. Catalyzes the reversible NADPH linked reduction of 3-dehydroshikimate (DHSA) to yield shikimate (SA). The polypeptide is Shikimate dehydrogenase (NADP(+)) (Cupriavidus pinatubonensis (strain JMP 134 / LMG 1197) (Cupriavidus necator (strain JMP 134))).